The following is a 356-amino-acid chain: D-alanine--D-alanine ligase (356 aa).

The ATP-grasp domain maps to 134-339 (KQLFEHRGLP…YSDLITKLID (206 aa)). 167–222 (KDKLTYPVFVKPANLGSSVGISKCNNEDELKSGIEEAFQFDRKLVIEQGINAREVE) is a binding site for ATP. Positions 293, 306, and 308 each coordinate Mg(2+).

Belongs to the D-alanine--D-alanine ligase family. Mg(2+) is required as a cofactor. Mn(2+) serves as cofactor.

The protein localises to the cytoplasm. It catalyses the reaction 2 D-alanine + ATP = D-alanyl-D-alanine + ADP + phosphate + H(+). It functions in the pathway cell wall biogenesis; peptidoglycan biosynthesis. Cell wall formation. In Staphylococcus haemolyticus (strain JCSC1435), this protein is D-alanine--D-alanine ligase.